Consider the following 231-residue polypeptide: MAKLTKRQKAIAGKIEAGKAYNFVEAAALLTELSTVKFSESVDVAVNLGVDPRKSDQVVRSATVLPHGTGKTVRVAVFTQGPAAEAALAAGADRVGMDDLAAEMKGGDLNYDVVIASPDAMRVVGQLGQVLGPRGLMPNPKVGTVTPDVASAVKNAKAGQVRYRTDKNGIIHTSVGKVGFDAVKLKENVEALIADLKRIKPASSKGIYVKRVTLSTTMGPGLVIDQGSLDV.

This sequence belongs to the universal ribosomal protein uL1 family. Part of the 50S ribosomal subunit.

Functionally, binds directly to 23S rRNA. The L1 stalk is quite mobile in the ribosome, and is involved in E site tRNA release. Its function is as follows. Protein L1 is also a translational repressor protein, it controls the translation of the L11 operon by binding to its mRNA. The chain is Large ribosomal subunit protein uL1 from Pseudomonas fluorescens (strain ATCC BAA-477 / NRRL B-23932 / Pf-5).